The following is a 374-amino-acid chain: Translocating chain-associated membrane protein 1 (374 aa).

Residues 1–29 (MAIRKKSTKSPPVLSHEFVLQNHADIVSC) are Cytoplasmic-facing. A helical transmembrane segment spans residues 30-50 (VAMVFLLGLMFEITAKASIIF). The Lumenal segment spans residues 51 to 76 (VTLQYNVTLPATEEQATESVSLYYYG). Asn-56 carries an N-linked (GlcNAc...) asparagine glycan. The chain crosses the membrane as a helical span at residues 77 to 97 (IKDLATVFFYMLVAIIIHAVI). Residues 98–121 (QEYMLDKINRRMHFSKTKHSKFNE) lie on the Cytoplasmic side of the membrane. In terms of domain architecture, TLC spans 117 to 326 (SKFNESGQLS…NFQLRRWREH (210 aa)). Residues 122 to 142 (SGQLSAFYLFACVWGTFILIS) form a helical membrane-spanning segment. Residues 143–159 (ENYISDPTILWRAYPHN) lie on the Lumenal side of the membrane. Residues 160–180 (LMTFQMKFFYISQLAYWLHAF) traverse the membrane as a helical segment. The Cytoplasmic portion of the chain corresponds to 181–192 (PELYFQKTKKED). The helical transmembrane segment at 193-213 (IPRQLVYIGLYLFHIAGAYLL) threads the bilayer. Over 214-217 (NLNH) the chain is Lumenal. Residues 218 to 238 (LGLVLLVLHYFVEFLFHISRL) traverse the membrane as a helical segment. Over 239–251 (FYFSNEKYQKGFS) the chain is Cytoplasmic. The helical transmembrane segment at 252-272 (LWAVLFVLGRLLTLILSVLTV) threads the bilayer. Residues 273-297 (GFGLARAENQKLDFSTGNFNVLAVR) are Lumenal-facing. The chain crosses the membrane as a helical span at residues 298-318 (IAVLASICVTQAFMMWKFINF). Residues 319 to 374 (QLRRWREHSAFQAPAVKKKPTVTKGRSSKKGTENGVNGTLTSNVADSPRNKKEKSS) are Cytoplasmic-facing. A compositionally biased stretch (basic residues) spans 334–347 (VKKKPTVTKGRSSK). A disordered region spans residues 334 to 374 (VKKKPTVTKGRSSKKGTENGVNGTLTSNVADSPRNKKEKSS). Over residues 352 to 363 (NGVNGTLTSNVA) the composition is skewed to polar residues. Ser-365 is subject to Phosphoserine.

The protein belongs to the TRAM family. In terms of assembly, interacts with SEC61B. May interact with Derlin-1/DERL1. (Microbial infection) Interacts with human cytomegalovirus/HHV-5 proteins US2 and US11. Post-translationally, N-glycosylated.

The protein localises to the endoplasmic reticulum membrane. Its function is as follows. Involved in the translocation of nascent protein chains into or through the endoplasmic reticulum (ER) membrane by facilitating the proper chain positioning at the SEC61 channel. Regulates the exposure of nascent secretory protein chain to the cytosol during translocation into the ER. May affect the phospholipid bilayer in the vicinity of the lateral gate of the SEC61 channel, thereby facilitating ER protein transport. Intimately associates with transmembrane (TM) domain of nascent membrane proteins during the entire integration process into the ER membrane. Associates with the second TM domain of G-protein-coupled receptor opsin/OPSD nascent chain in the ER membrane, which may facilitate its integration into the membrane. Under conditions of ER stress, participates in the disposal of misfolded ER membrane proteins during the unfolded protein response (UPR), an integrated stress response (ISR) pathway, by selectively retrotranslocating misfolded ER-membrane proteins from the ER into the cytosol where they are ubiquitinated and degraded by the proteasome. Functionally, (Microbial infection) In case of cytomegalovirus infection, participates in US2- and US11-mediated ER-to-cytosol retrotranslocation and subsequent degradation of major histocompatibility complex (MHC) class I heavy chains, thereby decreasing the immune detection by cytotoxic T-cells. This chain is Translocating chain-associated membrane protein 1, found in Homo sapiens (Human).